The chain runs to 972 residues: MTELPTTVPGYNSAVAQTDSDAMRYRYTAELAGRIESTWQDNWARLQTFNVPNPVGSLAPPDGSVVPADKLFVQDMFPYPSGDGLHVGHPLGYIATDVYARYFRMTGHNVLHAMGFDAFGLPAEQYAMQTGTHPRILTEANVVNFRHQLGRLGLGHDSRRTFSTTDVEFYKWTQWIFLQIYNAWFDVAANKARPIAELIAEFDSGERRLVDGRDWATLSAGERADVIDNCRLVYRADSMVNWCPGLGTVLANEEVTADGRSDRGNFPVFRKRLRQWMMRITAYADRLLDDLDLLDWPEQVKTMQRNWIGRSSGATVLFSAILSRSDAATTEVDVEVFTTRPDTMFGVTYLVLAPEHNLVDELVATVWPDRTDPRWTYGAATPGAAVAAYRRAIVAKSDLDRQESKEKTGVFLGRYATNPATGKPVPIFVADYVLVGYGTGAVMAVPGHDPRDWDFAHKFHLPIVEVIAGSDISEAAYVGDGVLVNSGYLDGMDVATAQEAITARLESEGRGHARIEFKLRDWLFARQRYWGEPFPIIYDSDGRPHALDEAALPVELPDVPYYSPVLFDPDDADSEPSPPLAKATEWVHVELDLGDGLKPYSRDTNVMPQWAGSSWYELRYTDPHNSERLCAKENEAYWMGPRPTEHGIDDPGGVDLYVGGAEHAVLHLLYARFWHKVLYDLGHVSSREPYRRLINQGYIQAFAYTDAHGSYVPANQVFQRGDGFFCPGPDGEIEVFQEFGKIGKSLKNSVSPDEICDEYGADTLRVYEMSMGPLEASRPWATKDVVGAYRFLQRVWRLVVDERTGETRVVDTAGELDTYTLRTLHRTIAGVSQDYAALRNNTATAKLIEYTNHLTKEHRGSVPRVAVEPLVLMLAPLAPHLAEELWLRLGHTTSLANGPFPQADPAYLVDDTVEYPVQVNGKIRGRIVVAADADYDTLKTVALADDKVQQFLAGATPRKVIVVAGRLISLVI.

The 'HIGH' region motif lies at 78–89 (PYPSGDGLHVGH). A 'KMSKS' region motif is present at residues 741-745 (KIGKS). Lysine 744 is an ATP binding site.

It belongs to the class-I aminoacyl-tRNA synthetase family.

Its subcellular location is the cytoplasm. The catalysed reaction is tRNA(Leu) + L-leucine + ATP = L-leucyl-tRNA(Leu) + AMP + diphosphate. The sequence is that of Leucine--tRNA ligase from Mycobacterium leprae (strain Br4923).